The following is a 333-amino-acid chain: MQISVNEFLTPRHIDVQVVSPTRAKITLEPLERGFGHTLGNALRRILLSSMPGCAVVEAEIDGVLHEYSAIEGVQEDVIEILLNLKGLAIKLHGRDEVTLTLSKKGSGVVTAADIQLDHDVEIVNPDHVIANLASNGALNMKLTVARGRGYEPADSRQSDEDESRSIGRLQLDSSFSPVRRIAYVVENARVEQRTNLDKLVIDLETNGTLDPEEAIRRAATILQQQLAAFVDLKGDSEPVVVEQEDEIDPILLRPVDDLELTVRSANCLKAENIYYIGDLIQRTEVELLKTPNLGKKSLTEIKDVLASRGLSLGMRLDNWPPASLKKDDKATA.

The interval methionine 1–lysine 234 is alpha N-terminal domain (alpha-NTD). The tract at residues isoleucine 248–alanine 333 is alpha C-terminal domain (alpha-CTD).

This sequence belongs to the RNA polymerase alpha chain family. Homodimer. The RNAP catalytic core consists of 2 alpha, 1 beta, 1 beta' and 1 omega subunit. When a sigma factor is associated with the core the holoenzyme is formed, which can initiate transcription.

The catalysed reaction is RNA(n) + a ribonucleoside 5'-triphosphate = RNA(n+1) + diphosphate. Its function is as follows. DNA-dependent RNA polymerase catalyzes the transcription of DNA into RNA using the four ribonucleoside triphosphates as substrates. This is DNA-directed RNA polymerase subunit alpha from Pseudomonas fluorescens (strain Pf0-1).